The primary structure comprises 396 residues: Phosphoglycerate kinase (396 aa).

Substrate is bound by residues 21–23, R37, 60–63, R121, and R154; these read DFN and HLGR. Residues K205, G296, E327, and 353-356 contribute to the ATP site; that span reads GGDS.

It belongs to the phosphoglycerate kinase family. In terms of assembly, monomer.

The protein resides in the cytoplasm. It catalyses the reaction (2R)-3-phosphoglycerate + ATP = (2R)-3-phospho-glyceroyl phosphate + ADP. The protein operates within carbohydrate degradation; glycolysis; pyruvate from D-glyceraldehyde 3-phosphate: step 2/5. The polypeptide is Phosphoglycerate kinase (Anaeromyxobacter sp. (strain K)).